We begin with the raw amino-acid sequence, 734 residues long: MTEENSSITAETVASHGLSPEEYDTIKQALGRTPNLVELGIFSAMWSEHCSYKSSRKHLRELPTTGSQVICGPGENAGVVDIGDGQAAIFKMESHNHPSYIEPYQGAATGVGGILRDVFTMGARPVANLNALRFGSPKHPKTPHLVSGVVAGIGGYGNCVGVPTVGGEVNFHPAYDGNNLVNAMTVGVAETNKIFYSAASGAGNPIVYVGSKTGRDGIHGATMASADFGKDAEEKRPTVQVGDPFSEKLLIEACLELMASDAIVAIQDMGAAGLTSSAVEMASKGEVGIELDMDMVPCREEGMTPYEMMLSESQERMLMVLKPGREAEAEAIFKKWELDFAIIGRVTDSKHMVLTWKGDIVCDIPLAPLADNAPCYDRPWVATPKAKALGAVPASGSITDNLVTLVGSPDLASRRWIWEQYDNMVGADTVQCPGGDAAVVRVHGTEKALAMSVDVTPRYCRADPEEGGKQAVAECYRNITAVGALPLASTDCLNFGNPERPEIMGQIVGAIKGIGEACRALDMPIVSGNVSLYNETRQDDGSSLAILPTPTIGGVGLLQDWRDSTTIAFKNTGEEIYLVGNSGQGHLGQSIWLREIAGREEGTAPSVDLAQEKATGDFIRAMIQDGMLCAVHDISDGGLAVALAEMALAGNIGATVEAHDKAIAEHAYYFGEDQGRYLVSSTNAVALVSAAEKAGIPVFRLGVTGGDAVVLNSQSVSLEKLRKSHEAFLPELMQ.

The active site involves H49. ATP contacts are provided by Y52 and K91. E93 is a binding site for Mg(2+). Substrate contacts are provided by residues 94–97 (SHNH) and R116. H95 (proton acceptor) is an active-site residue. A Mg(2+)-binding site is contributed by D117. Substrate is bound at residue Q240. Residue D268 coordinates Mg(2+). 312–314 (ESQ) serves as a coordination point for substrate. 2 residues coordinate ATP: D491 and G528. Residue N529 coordinates Mg(2+). Residue S531 participates in substrate binding.

Belongs to the FGAMS family. Monomer. Part of the FGAM synthase complex composed of 1 PurL, 1 PurQ and 2 PurS subunits.

The protein resides in the cytoplasm. It carries out the reaction N(2)-formyl-N(1)-(5-phospho-beta-D-ribosyl)glycinamide + L-glutamine + ATP + H2O = 2-formamido-N(1)-(5-O-phospho-beta-D-ribosyl)acetamidine + L-glutamate + ADP + phosphate + H(+). It functions in the pathway purine metabolism; IMP biosynthesis via de novo pathway; 5-amino-1-(5-phospho-D-ribosyl)imidazole from N(2)-formyl-N(1)-(5-phospho-D-ribosyl)glycinamide: step 1/2. In terms of biological role, part of the phosphoribosylformylglycinamidine synthase complex involved in the purines biosynthetic pathway. Catalyzes the ATP-dependent conversion of formylglycinamide ribonucleotide (FGAR) and glutamine to yield formylglycinamidine ribonucleotide (FGAM) and glutamate. The FGAM synthase complex is composed of three subunits. PurQ produces an ammonia molecule by converting glutamine to glutamate. PurL transfers the ammonia molecule to FGAR to form FGAM in an ATP-dependent manner. PurS interacts with PurQ and PurL and is thought to assist in the transfer of the ammonia molecule from PurQ to PurL. In Zymomonas mobilis subsp. mobilis (strain ATCC 31821 / ZM4 / CP4), this protein is Phosphoribosylformylglycinamidine synthase subunit PurL.